Consider the following 102-residue polypeptide: NADH-quinone oxidoreductase subunit K (102 aa).

A run of 3 helical transmembrane segments spans residues 6–26, 30–50, and 64–84; these read LGQG…GVLV, LLFM…AFIV, and FILV…LILL.

It belongs to the complex I subunit 4L family. NDH-1 is composed of 14 different subunits. Subunits NuoA, H, J, K, L, M, N constitute the membrane sector of the complex.

The protein resides in the cell inner membrane. The enzyme catalyses a quinone + NADH + 5 H(+)(in) = a quinol + NAD(+) + 4 H(+)(out). Its function is as follows. NDH-1 shuttles electrons from NADH, via FMN and iron-sulfur (Fe-S) centers, to quinones in the respiratory chain. The immediate electron acceptor for the enzyme in this species is believed to be ubiquinone. Couples the redox reaction to proton translocation (for every two electrons transferred, four hydrogen ions are translocated across the cytoplasmic membrane), and thus conserves the redox energy in a proton gradient. The polypeptide is NADH-quinone oxidoreductase subunit K (Acidiphilium cryptum (strain JF-5)).